Here is a 25-residue protein sequence, read N- to C-terminus: Pancreatic triacylglycerol lipase (25 aa).

An intrachain disulfide couples C4 to C10.

The protein belongs to the AB hydrolase superfamily. Lipase family. As to quaternary structure, forms a 1:1 stoichiometric complex with (pro)colipase/CLPS.

It is found in the secreted. The catalysed reaction is a triacylglycerol + H2O = a diacylglycerol + a fatty acid + H(+). It catalyses the reaction 1,2,3-tributanoylglycerol + H2O = dibutanoylglycerol + butanoate + H(+). It carries out the reaction 1,2,3-tri-(9Z-octadecenoyl)-glycerol + H2O = di-(9Z)-octadecenoylglycerol + (9Z)-octadecenoate + H(+). The enzyme catalyses all-trans-retinyl hexadecanoate + H2O = all-trans-retinol + hexadecanoate + H(+). The catalysed reaction is 1,2-di-(9Z-octadecenoyl)-glycerol + H2O = (9Z-octadecenoyl)-glycerol + (9Z)-octadecenoate + H(+). Inhibited by bile salts, is reactivated by (pro)colipase/CLPS. Plays an important role in fat metabolism. It preferentially splits the esters of long-chain fatty acids at positions 1 and 3, producing mainly 2-monoacylglycerol and free fatty acids, and shows considerably higher activity against insoluble emulsified substrates than against soluble ones. This is Pancreatic triacylglycerol lipase (PNLIP) from Felis catus (Cat).